Here is a 187-residue protein sequence, read N- to C-terminus: Accessory gene regulator protein B (187 aa).

5 consecutive transmembrane segments (helical) span residues 49–69 (ISIF…YMLI), 82–102 (ILCY…LINI), 106–126 (FTYL…YAPA), 144–164 (VSII…PFYA), and 166–186 (FMLL…FPKE).

The protein belongs to the AgrB family.

It localises to the cell membrane. Functionally, essential for the production of a quorum sensing system signal molecule, the autoinducing peptide (AIP). This quorum sensing system is responsible for the regulation of the expression of virulence factor genes. Involved in the proteolytic processing of AgrD, the precursor of AIP. The chain is Accessory gene regulator protein B from Staphylococcus aureus (strain bovine RF122 / ET3-1).